A 417-amino-acid polypeptide reads, in one-letter code: Paired box protein Pax-2 (417 aa).

The paired DNA-binding region spans 16–142; the sequence is GHGGVNQLGG…SSINRIIRTK (127 aa). The segment at 19–75 is PAI subdomain; sequence GVNQLGGVFVNGRPLPDVVRQRIVELAHQGVRPCDISRQLRVSHGCVSKILGRYYET. The segment at 94-142 is RED subdomain; sequence KVVDKIAEYKRQNPTMFAWEIRDRLLAEGICDNDTVPSVSSINRIIRTK. Thr-226 is modified (phosphothreonine). The tract at residues 304–325 is disordered; that stretch reads KSSLSASTNPELGSNVSGTQTY. Residues 305 to 325 show a composition bias toward polar residues; the sequence is SSLSASTNPELGSNVSGTQTY.

Interacts with ELGN3; the interaction targets PAX2 for destruction. Interacts with TLE4. In terms of tissue distribution, expressed in primitive cells of the kidney, ureter, eye, ear and central nervous system.

Its subcellular location is the nucleus. In terms of biological role, transcription factor that may have a role in kidney cell differentiation. Has a critical role in the development of the urogenital tract, the eyes, and the CNS. The sequence is that of Paired box protein Pax-2 (PAX2) from Homo sapiens (Human).